Reading from the N-terminus, the 232-residue chain is Ornithine carbamoyltransferase (232 aa).

Carbamoyl phosphate contacts are provided by residues Q15, R39, and 66-69; that span reads HPTQ. Residues N99, D163, and 167–168 each bind L-ornithine; that span reads SM. Carbamoyl phosphate is bound by residues 204 to 207 and T232; that span reads HCLP.

Belongs to the aspartate/ornithine carbamoyltransferase superfamily. OTCase family.

Its subcellular location is the cytoplasm. The enzyme catalyses carbamoyl phosphate + L-ornithine = L-citrulline + phosphate + H(+). It functions in the pathway amino-acid biosynthesis; L-arginine biosynthesis; L-arginine from L-ornithine and carbamoyl phosphate: step 1/3. The polypeptide is Ornithine carbamoyltransferase (argF) (Neisseria animalis).